The primary structure comprises 338 residues: DNA fragmentation factor subunit beta (338 aa).

The 77-residue stretch at 4-80 (KPKSVKLRAL…LLTLGQAWQG (77 aa)) folds into the CIDE-N domain.

In terms of assembly, heterodimer of DFFA and DFFB. Interacts with H1-1.

It is found in the cytoplasm. The protein localises to the nucleus. Its activity is regulated as follows. Inhibited by DFFA (DFF45). Its function is as follows. Nuclease that induces DNA fragmentation and chromatin condensation during apoptosis. Degrades naked DNA and induces apoptotic morphology. In Homo sapiens (Human), this protein is DNA fragmentation factor subunit beta (DFFB).